A 489-amino-acid chain; its full sequence is Aspartate/glutamate permease AcaP (489 aa).

12 consecutive transmembrane segments (helical) span residues 6–26 (IRWF…GNVV), 36–56 (VVTS…LIVG), 91–111 (VVHI…FGWV), 122–142 (MSMT…LWLS), 152–172 (IGGL…VMAI), 195–215 (IPKF…AVGG), 238–258 (FLLA…MGMI), 290–310 (LMIV…AFSI), 342–362 (GYTL…LGIG), 373–393 (NLNS…FIML), 413–433 (AMIA…LGMV), and 449–469 (LASN…LPFI).

It belongs to the amino acid-polyamine-organocation (APC) superfamily. Glutamate:GABA antiporter (GGA) (TC 2.A.3.7) family.

It is found in the cell membrane. Its function is as follows. Involved in aspartate and glutamate uptake. Plays no significant role in the excretion of accumulated glutamate. The protein is Aspartate/glutamate permease AcaP of Lactococcus lactis subsp. cremoris (strain MG1363).